The sequence spans 38 residues: MKVRPSVKRMCDSCKIVKRRGRVMVICINPKHKQRQGK.

It belongs to the bacterial ribosomal protein bL36 family.

This chain is Large ribosomal subunit protein bL36, found in Limosilactobacillus fermentum (strain NBRC 3956 / LMG 18251) (Lactobacillus fermentum).